We begin with the raw amino-acid sequence, 545 residues long: Glucose-6-phosphate isomerase (545 aa).

Glutamate 343 acts as the Proton donor in catalysis. Catalysis depends on residues histidine 374 and lysine 513.

The protein belongs to the GPI family.

Its subcellular location is the cytoplasm. It carries out the reaction alpha-D-glucose 6-phosphate = beta-D-fructose 6-phosphate. Its pathway is carbohydrate biosynthesis; gluconeogenesis. It participates in carbohydrate degradation; glycolysis; D-glyceraldehyde 3-phosphate and glycerone phosphate from D-glucose: step 2/4. Catalyzes the reversible isomerization of glucose-6-phosphate to fructose-6-phosphate. This is Glucose-6-phosphate isomerase from Methylibium petroleiphilum (strain ATCC BAA-1232 / LMG 22953 / PM1).